A 160-amino-acid polypeptide reads, in one-letter code: Lipoprotein signal peptidase (160 aa).

2 consecutive transmembrane segments (helical) span residues 60–80 and 84–104; these read TEWL…AFFL and LPFL…AGTI. Residues Asp118 and Asp132 contribute to the active site. A helical transmembrane segment spans residues 127-147; the sequence is TFNMADSCLTLGIIWLVLLYL.

The protein belongs to the peptidase A8 family.

Its subcellular location is the cell membrane. It catalyses the reaction Release of signal peptides from bacterial membrane prolipoproteins. Hydrolyzes -Xaa-Yaa-Zaa-|-(S,diacylglyceryl)Cys-, in which Xaa is hydrophobic (preferably Leu), and Yaa (Ala or Ser) and Zaa (Gly or Ala) have small, neutral side chains.. Its pathway is protein modification; lipoprotein biosynthesis (signal peptide cleavage). This protein specifically catalyzes the removal of signal peptides from prolipoproteins. The chain is Lipoprotein signal peptidase from Dehalococcoides mccartyi (strain ATCC BAA-2266 / KCTC 15142 / 195) (Dehalococcoides ethenogenes (strain 195)).